A 613-amino-acid chain; its full sequence is YTH domain-containing family protein 2 (613 aa).

3 disordered regions span residues 1–43, 215–234, and 244–396; these read MSAS…AQPR, SQVSTAPTMPPASMAPAKTA, and AKPQ…TVPA. Positions 2–397 are localization to mRNA processing bodies (P-bodies); sequence SASSLLEQRP…GMGGITVPAE (396 aa). The span at 16-27 shows a compositional bias: polar residues; the sequence is NKVQNGAVTQKD. Low complexity-rich tracts occupy residues 218–234, 295–307, and 345–360; these read STAPTMPPASMAPAKTA, NGQPPNQSSPQPG, and PPQLSQGPPASQPSQP. Positions 398–613 are interaction with m6A-containing mRNAs; sequence PHPVLEKLRM…RMQDRQGRVK (216 aa). The region spanning 423 to 557 is the YTH domain; sequence GRVFIIKSYS…DKARQVLKII (135 aa). Residues 429 to 431, aspartate 435, 445 to 446, asparagine 475, tryptophan 499, and tryptophan 504 each bind RNA; these read KSY and WC. Basic and acidic residues-rich tracts occupy residues 578 to 587 and 604 to 613; these read EEEESVKKVE and RMQDRQGRVK. The segment at 578-613 is disordered; that stretch reads EEEESVKKVEVQGSDPYSNNSSRSHYRMQDRQGRVK.

Belongs to the YTHDF family. YTHDF2 subfamily.

Its subcellular location is the cytoplasm. It is found in the cytosol. The protein localises to the P-body. The protein resides in the stress granule. It localises to the nucleus. In terms of biological role, specifically recognizes and binds N6-methyladenosine (m6A)-containing RNAs, and regulates their stability. M6A is a modification present at internal sites of mRNAs and some non-coding RNAs and plays a role in mRNA stability and processing. Acts as a regulator of mRNA stability by promoting degradation of m6A-containing mRNAs. The YTHDF paralogs (ythdf1, ythdf2 and ythdf3) share m6A-containing mRNAs targets and act redundantly to mediate mRNA degradation and cellular differentiation. Plays a key role in maternal-to-zygotic transition during early embryonic development, the process during which maternally inherited mRNAs are degraded: acts by binding m6A-containing maternal mRNAs and promoting their degradation. More than one-third of maternal mRNAs can be modified by m6A. Binding to m6A-containing mRNAs results in mRNA degradation. Also involved in hematopoietic stem cells specification by binding to m6A-containing mRNAs, such as notch1a, and promote their degradation. The decreased Notch signaling following notch1a degradation promotes endothelial to hematopoietic transition. Promotes formation of phase-separated membraneless compartments, such as P-bodies or stress granules, by undergoing liquid-liquid phase separation upon binding to mRNAs containing multiple m6A-modified residues: polymethylated mRNAs act as a multivalent scaffold for the binding of YTHDF proteins, juxtaposing their disordered regions and thereby leading to phase separation. The resulting mRNA-YTHDF complexes then partition into different endogenous phase-separated membraneless compartments, such as P-bodies, stress granules or neuronal RNA granules. The chain is YTH domain-containing family protein 2 from Danio rerio (Zebrafish).